Consider the following 229-residue polypeptide: Purine nucleoside phosphorylase BB_0467 (229 aa).

3 residues coordinate Zn(2+): His-55, Cys-91, and His-108.

Belongs to the purine nucleoside phosphorylase YfiH/LACC1 family. As to quaternary structure, homodimer. Cu(2+) is required as a cofactor. Zn(2+) serves as cofactor.

The catalysed reaction is adenosine + phosphate = alpha-D-ribose 1-phosphate + adenine. It catalyses the reaction S-methyl-5'-thioadenosine + phosphate = 5-(methylsulfanyl)-alpha-D-ribose 1-phosphate + adenine. It carries out the reaction inosine + phosphate = alpha-D-ribose 1-phosphate + hypoxanthine. The enzyme catalyses adenosine + H2O + H(+) = inosine + NH4(+). Purine nucleoside enzyme that catalyzes the phosphorolysis of adenosine and inosine nucleosides, yielding D-ribose 1-phosphate and the respective free bases, adenine and hypoxanthine. Also catalyzes the phosphorolysis of S-methyl-5'-thioadenosine into adenine and S-methyl-5-thio-alpha-D-ribose 1-phosphate. Also has adenosine deaminase activity. This is Purine nucleoside phosphorylase BB_0467 from Borreliella burgdorferi (strain ATCC 35210 / DSM 4680 / CIP 102532 / B31) (Borrelia burgdorferi).